The chain runs to 404 residues: Zinc finger protein zfs1 (404 aa).

Residues 134 to 149 (SYLHSGSSPHGNTSNH) show a composition bias toward polar residues. Disordered regions lie at residues 134–168 (SYLH…TGSG) and 259–322 (SNAS…APNG). The span at 150-168 (PSPISSLESLPSRSSTGSG) shows a compositional bias: low complexity. Positions 259-283 (SNASIRNAPSNLSKQFSPSGNSPLT) are enriched in polar residues. Residues 304-317 (GSASHPHGSGSSNG) are compositionally biased toward low complexity. C3H1-type zinc fingers lie at residues 326-354 (LYKT…HGNQ) and 364-392 (KYKS…HDES).

As to quaternary structure, interacts with moc3.

The protein localises to the cytoplasm. It localises to the nucleus. Functionally, binds to specific AU-rich elements (ARE) in the 3'-untranslated region of target mRNAs and promotes their degradation. Binds to ARE present in the arz1 mRNA and stimulates the rate of arz1 mRNA decay. Required for coordination of septum formation with exit from mitosis. Involved in the mating response pathway. Induces sexual development and ascus formation. The sequence is that of Zinc finger protein zfs1 (zfs1) from Schizosaccharomyces pombe (strain 972 / ATCC 24843) (Fission yeast).